Reading from the N-terminus, the 267-residue chain is Undecaprenyl-diphosphatase 1 (267 aa).

8 helical membrane passes run 6-26 (VLVV…AAGL), 41-60 (AALS…IYFW), 83-103 (HLLL…WLVL), 109-129 (LVGQ…LWGC), 142-162 (MSWV…VPGV), 185-205 (FSML…FWGL), 217-237 (LLMA…GMMA), and 244-264 (FVPF…LVYF).

This sequence belongs to the UppP family.

The protein resides in the cell inner membrane. It carries out the reaction di-trans,octa-cis-undecaprenyl diphosphate + H2O = di-trans,octa-cis-undecaprenyl phosphate + phosphate + H(+). Its function is as follows. Catalyzes the dephosphorylation of undecaprenyl diphosphate (UPP). Confers resistance to bacitracin. This chain is Undecaprenyl-diphosphatase 1, found in Paramagnetospirillum magneticum (strain ATCC 700264 / AMB-1) (Magnetospirillum magneticum).